The following is a 374-amino-acid chain: Chaperone protein DnaJ (374 aa).

In terms of domain architecture, J spans 4–68; the sequence is DYYEILGVSR…ETRNRYDRFG (65 aa). Residues 133–215 form a CR-type zinc finger; it reads GGEKEIRIRH…CGGSGRRQET (83 aa). The Zn(2+) site is built by C146, C149, C163, C166, C189, C192, C203, and C206. 4 CXXCXGXG motif repeats span residues 146 to 153, 163 to 170, 189 to 196, and 203 to 210; these read CQTCKGSG, CTTCSGTG, CPTCDGAG, and CDVCGGSG.

The protein belongs to the DnaJ family. As to quaternary structure, homodimer. Requires Zn(2+) as cofactor.

The protein resides in the cytoplasm. Participates actively in the response to hyperosmotic and heat shock by preventing the aggregation of stress-denatured proteins and by disaggregating proteins, also in an autonomous, DnaK-independent fashion. Unfolded proteins bind initially to DnaJ; upon interaction with the DnaJ-bound protein, DnaK hydrolyzes its bound ATP, resulting in the formation of a stable complex. GrpE releases ADP from DnaK; ATP binding to DnaK triggers the release of the substrate protein, thus completing the reaction cycle. Several rounds of ATP-dependent interactions between DnaJ, DnaK and GrpE are required for fully efficient folding. Also involved, together with DnaK and GrpE, in the DNA replication of plasmids through activation of initiation proteins. In Microcystis aeruginosa (strain NIES-843 / IAM M-2473), this protein is Chaperone protein DnaJ.